Reading from the N-terminus, the 118-residue chain is Large ribosomal subunit protein bL20 (118 aa).

The protein belongs to the bacterial ribosomal protein bL20 family.

Binds directly to 23S ribosomal RNA and is necessary for the in vitro assembly process of the 50S ribosomal subunit. It is not involved in the protein synthesizing functions of that subunit. The polypeptide is Large ribosomal subunit protein bL20 (Bacillus anthracis (strain CDC 684 / NRRL 3495)).